An 805-amino-acid chain; its full sequence is 1,4-alpha-glucan-branching enzyme 2-2, chloroplastic/amyloplastic (805 aa).

Residues 1-32 (MVVIHGVSLTPRFTLPSRPLNTGFNAGNSTLS) constitute a chloroplast transit peptide. The active-site Nucleophile is Asp451. Glu506 acts as the Proton donor in catalysis.

It belongs to the glycosyl hydrolase 13 family. GlgB subfamily. As to quaternary structure, monomer. Expressed in seedlings, roots, stems, leaves, inflorescences, seeds and flowers.

It localises to the plastid. It is found in the chloroplast stroma. The protein localises to the amyloplast. The enzyme catalyses Transfers a segment of a (1-&gt;4)-alpha-D-glucan chain to a primary hydroxy group in a similar glucan chain.. Its pathway is glycan biosynthesis; starch biosynthesis. Catalyzes the formation of the alpha-1,6-glucosidic linkages in starch by scission of a 1,4-alpha-linked oligosaccharide from growing alpha-1,4-glucan chains and the subsequent attachment of the oligosaccharide to the alpha-1,6 position. This chain is 1,4-alpha-glucan-branching enzyme 2-2, chloroplastic/amyloplastic (SBE2.2), found in Arabidopsis thaliana (Mouse-ear cress).